A 123-amino-acid chain; its full sequence is Potassium voltage-gated channel subfamily E member 2 (123 aa).

N6 and N29 each carry an N-linked (GlcNAc...) asparagine glycan. A helical transmembrane segment spans residues 49-69 (VILYLMVMIGMFAFIVVAILV). The Cytoplasmic segment spans residues 70–123 (STVKSKRREHSQDPYHQYIVEDWQQKYRSQILHLEDSKATIHENLGATGFTVSP).

Belongs to the potassium channel KCNE family. Interacts with KCNB1. Associates with KCNH2/ERG1. May associate with KCNQ2 and KCNQ3. Associates with HCN1 and probably HCN2. Heteromultimer with KCNC2. Interacts with KCNC2. Interacts with KCNQ1; forms a heterooligomer complex that targets to the membrane raft and leading to currents with an apparently instantaneous activation, a rapid deactivation process and a linear current-voltage relationship and decreases the amplitude of the outward current.

The protein localises to the cell membrane. Its subcellular location is the apical cell membrane. Functionally, ancillary protein that functions as a regulatory subunit of the voltage-gated potassium (Kv) channel complex composed of pore-forming and potassium-conducting alpha subunits and of regulatory beta subunits. KCNE2 beta subunit modulates the gating kinetics and enhances stability of the channel complex. Alters the gating of the delayed rectifier Kv channel containing KCNB1 alpha subunit. Associates with KCNH2/HERG alpha subunit Kv channel to form the rapidly activating component of the delayed rectifying potassium current (IKr) in heart. May associate with KCNQ2 and/or KCNQ3 alpha subunits to modulate the native M-type current. May associate with HCN1 and HCN2 channel subunits to increase potassium current. Forms a heterooligomer complex with KCNQ1/KVLQT1 alpha subunits which leads to currents with an apparently instantaneous activation, a rapid deactivation process and a linear current-voltage relationship and decreases the amplitude of the outward current. KCNQ1-KCNE2 channel associates with Na(+)-coupled myo-inositol symporter in the apical membrane of choroid plexus epithelium and regulates the myo-inositol gradient between blood and cerebrospinal fluid with an impact on neuron excitability. This is Potassium voltage-gated channel subfamily E member 2 (Kcne2) from Cavia porcellus (Guinea pig).